A 1270-amino-acid polypeptide reads, in one-letter code: DNA-directed RNA polymerase subunit beta (1270 aa).

It belongs to the RNA polymerase beta chain family. In terms of assembly, the RNAP catalytic core consists of 2 alpha, 1 beta, 1 beta' and 1 omega subunit. When a sigma factor is associated with the core the holoenzyme is formed, which can initiate transcription.

The catalysed reaction is RNA(n) + a ribonucleoside 5'-triphosphate = RNA(n+1) + diphosphate. Its function is as follows. DNA-dependent RNA polymerase catalyzes the transcription of DNA into RNA using the four ribonucleoside triphosphates as substrates. The chain is DNA-directed RNA polymerase subunit beta from Bacteroides fragilis (strain ATCC 25285 / DSM 2151 / CCUG 4856 / JCM 11019 / LMG 10263 / NCTC 9343 / Onslow / VPI 2553 / EN-2).